A 198-amino-acid polypeptide reads, in one-letter code: dCTP deaminase, dUMP-forming (198 aa).

Residues 115–120 (KSSIAR), D133, 141–143 (TLE), Q162, Y175, and K184 contribute to the dCTP site. E143 serves as the catalytic Proton donor/acceptor.

It belongs to the dCTP deaminase family. In terms of assembly, homotrimer.

It carries out the reaction dCTP + 2 H2O = dUMP + NH4(+) + diphosphate. Its pathway is pyrimidine metabolism; dUMP biosynthesis; dUMP from dCTP: step 1/1. Its function is as follows. Bifunctional enzyme that catalyzes both the deamination of dCTP to dUTP and the hydrolysis of dUTP to dUMP without releasing the toxic dUTP intermediate. The protein is dCTP deaminase, dUMP-forming of Nanoarchaeum equitans (strain Kin4-M).